The following is a 206-amino-acid chain: Ribonuclease M5 (206 aa).

A Toprim domain is found at 8-91 (NEVIVVEGRD…AFLNRDEARP (84 aa)). Residues E14, D60, and D62 each coordinate Mg(2+).

This sequence belongs to the ribonuclease M5 family. It depends on Mg(2+) as a cofactor.

Its subcellular location is the cytoplasm. It catalyses the reaction Endonucleolytic cleavage of RNA, removing 21 and 42 nucleotides, respectively, from the 5'- and 3'-termini of a 5S-rRNA precursor.. Required for correct processing of both the 5' and 3' ends of 5S rRNA precursor. Cleaves both sides of a double-stranded region yielding mature 5S rRNA in one step. The chain is Ribonuclease M5 from Lactococcus lactis subsp. lactis (strain IL1403) (Streptococcus lactis).